We begin with the raw amino-acid sequence, 613 residues long: RUN domain-containing protein 1 (613 aa).

Residues 15 to 36 (AAVGPKAKDEEEEEEEPLPPCE) are disordered. Position 54 is a phosphothreonine (threonine 54). A compositionally biased stretch (low complexity) spans 57-69 (LEEATAEEPGAAP). Disordered regions lie at residues 57-79 (LEEA…PGRT), 140-177 (YEGP…RLET), and 305-330 (GKTG…KAED). Residues serine 71 and serine 75 each carry the phosphoserine modification. Residues 159–177 (PWLRGEDQSEQEKQERLET) are compositionally biased toward basic and acidic residues. Residues 160–235 (WLRGEDQSEQ…IKKLDMNLNE (76 aa)) adopt a coiled-coil conformation. Polar residues predominate over residues 309 to 325 (NGCSRTGSSRTPPGNSK). The RUN domain maps to 421-602 (ELTMAVRKEL…LKFSLPVDLA (182 aa)). The residue at position 497 (serine 497) is a Phosphoserine.

Its function is as follows. May play a role as p53/TP53 inhibitor and thus may have oncogenic activity. This is RUN domain-containing protein 1 (RUNDC1) from Homo sapiens (Human).